The chain runs to 324 residues: Heat-inducible transcription repressor HrcA (324 aa).

Belongs to the HrcA family.

In terms of biological role, negative regulator of class I heat shock genes (grpE-dnaK-dnaJ and groELS operons). Prevents heat-shock induction of these operons. The protein is Heat-inducible transcription repressor HrcA of Synechococcus sp. (strain CC9902).